The sequence spans 222 residues: Ribosomal RNA small subunit methyltransferase G (222 aa).

S-adenosyl-L-methionine contacts are provided by residues Gly-82, Leu-87, 132-133 (AE), and Arg-150.

This sequence belongs to the methyltransferase superfamily. RNA methyltransferase RsmG family.

Its subcellular location is the cytoplasm. Functionally, specifically methylates the N7 position of guanine in position 518 of 16S rRNA. The chain is Ribosomal RNA small subunit methyltransferase G from Corynebacterium jeikeium (strain K411).